The following is a 263-amino-acid chain: Isoprenyl transferase (263 aa).

Residue D26 is part of the active site. D26 lines the Mg(2+) pocket. Substrate is bound by residues 27–30, W31, R39, H43, and 71–73; these read GNGR and SSE. Residue N74 is the Proton acceptor of the active site. Substrate contacts are provided by residues W75, R77, R191, and 197 to 199; that span reads RIS. E210 is a binding site for Mg(2+). A disordered region spans residues 241-263; the sequence is GRTSEQIAGQQENKNTVSNEDRV. The span at 243 to 263 shows a compositional bias: polar residues; the sequence is TSEQIAGQQENKNTVSNEDRV.

It belongs to the UPP synthase family. Homodimer. Requires Mg(2+) as cofactor.

Functionally, catalyzes the condensation of isopentenyl diphosphate (IPP) with allylic pyrophosphates generating different type of terpenoids. In Nitrosomonas europaea (strain ATCC 19718 / CIP 103999 / KCTC 2705 / NBRC 14298), this protein is Isoprenyl transferase.